Consider the following 365-residue polypeptide: Protein-glutamate methylesterase/protein-glutamine glutaminase 2 (365 aa).

Residues 6–123 form the Response regulatory domain; it reads RVLIIDDSAS…ADSLSDDAMR (118 aa). Position 57 is a 4-aspartylphosphate (D57). In terms of domain architecture, CheB-type methylesterase spans 173–359; sequence AKTTEMVVCV…PLDQIAREVL (187 aa). Active-site residues include S185, H211, and D307.

This sequence belongs to the CheB family. In terms of processing, phosphorylated by CheA. Phosphorylation of the N-terminal regulatory domain activates the methylesterase activity.

The protein localises to the cytoplasm. It carries out the reaction [protein]-L-glutamate 5-O-methyl ester + H2O = L-glutamyl-[protein] + methanol + H(+). The catalysed reaction is L-glutaminyl-[protein] + H2O = L-glutamyl-[protein] + NH4(+). Functionally, involved in chemotaxis. Part of a chemotaxis signal transduction system that modulates chemotaxis in response to various stimuli. Catalyzes the demethylation of specific methylglutamate residues introduced into the chemoreceptors (methyl-accepting chemotaxis proteins or MCP) by CheR. Also mediates the irreversible deamidation of specific glutamine residues to glutamic acid. The sequence is that of Protein-glutamate methylesterase/protein-glutamine glutaminase 2 from Rhizobium johnstonii (strain DSM 114642 / LMG 32736 / 3841) (Rhizobium leguminosarum bv. viciae).